The chain runs to 194 residues: Acireductone dioxygenase 1 (194 aa).

Positions 1-21 are disordered; the sequence is MEAWYMDDSADDQRKPHHRSP. Histidine 87, histidine 89, glutamate 93, and histidine 132 together coordinate Fe(2+). Positions 87, 89, 93, and 132 each coordinate Ni(2+).

This sequence belongs to the acireductone dioxygenase (ARD) family. Requires Fe(2+) as cofactor. Ni(2+) is required as a cofactor.

The protein resides in the cytoplasm. The protein localises to the nucleus. It catalyses the reaction 1,2-dihydroxy-5-(methylsulfanyl)pent-1-en-3-one + O2 = 4-methylsulfanyl-2-oxobutanoate + formate + 2 H(+). The catalysed reaction is 1,2-dihydroxy-5-(methylsulfanyl)pent-1-en-3-one + O2 = 3-(methylsulfanyl)propanoate + CO + formate + 2 H(+). It functions in the pathway amino-acid biosynthesis; L-methionine biosynthesis via salvage pathway; L-methionine from S-methyl-5-thio-alpha-D-ribose 1-phosphate: step 5/6. Functionally, catalyzes 2 different reactions between oxygen and the acireductone 1,2-dihydroxy-3-keto-5-methylthiopentene (DHK-MTPene) depending upon the metal bound in the active site. Fe-containing acireductone dioxygenase (Fe-ARD) produces formate and 2-keto-4-methylthiobutyrate (KMTB), the alpha-ketoacid precursor of methionine in the methionine recycle pathway. Ni-containing acireductone dioxygenase (Ni-ARD) produces methylthiopropionate, carbon monoxide and formate, and does not lie on the methionine recycle pathway. The chain is Acireductone dioxygenase 1 from Physcomitrium patens (Spreading-leaved earth moss).